The primary structure comprises 216 residues: Somatotropin (216 aa).

Residues 1-26 form the signal peptide; it reads MAADSQTPWLLTFSLLCLLWPQEAGA. H45 serves as a coordination point for Zn(2+). C78 and C189 are oxidised to a cystine. Position 131 is a phosphoserine (S131). E198 contacts Zn(2+). C206 and C214 are joined by a disulfide.

The protein belongs to the somatotropin/prolactin family.

Its subcellular location is the secreted. Plays an important role in growth control. Its major role in stimulating body growth is to stimulate the liver and other tissues to secrete IGF1. It stimulates both the differentiation and proliferation of myoblasts. It also stimulates amino acid uptake and protein synthesis in muscle and other tissues. This is Somatotropin (Gh1) from Rattus norvegicus (Rat).